The sequence spans 202 residues: NAD(P)H-quinone oxidoreductase subunit I (202 aa).

4Fe-4S ferredoxin-type domains follow at residues 55-84 and 95-124; these read GRIH…VDWV and KNYS…MTEE. Residues Cys-64, Cys-67, Cys-70, Cys-74, Cys-104, Cys-107, Cys-110, and Cys-114 each coordinate [4Fe-4S] cluster. The span at 168 to 187 shows a compositional bias: basic and acidic residues; the sequence is EYDPHVVPSDRPRAGQRPEE. Residues 168–202 are disordered; sequence EYDPHVVPSDRPRAGQRPEELVDQYKQAAAANEEN.

Belongs to the complex I 23 kDa subunit family. NDH-1 is composed of at least 11 different subunits. The cofactor is [4Fe-4S] cluster.

The protein localises to the cellular thylakoid membrane. It carries out the reaction a plastoquinone + NADH + (n+1) H(+)(in) = a plastoquinol + NAD(+) + n H(+)(out). It catalyses the reaction a plastoquinone + NADPH + (n+1) H(+)(in) = a plastoquinol + NADP(+) + n H(+)(out). In terms of biological role, NDH-1 shuttles electrons from an unknown electron donor, via FMN and iron-sulfur (Fe-S) centers, to quinones in the respiratory and/or the photosynthetic chain. The immediate electron acceptor for the enzyme in this species is believed to be plastoquinone. Couples the redox reaction to proton translocation, and thus conserves the redox energy in a proton gradient. The sequence is that of NAD(P)H-quinone oxidoreductase subunit I from Synechococcus elongatus (strain ATCC 33912 / PCC 7942 / FACHB-805) (Anacystis nidulans R2).